The sequence spans 79 residues: Cytochrome b (79 aa).

The next 3 membrane-spanning stretches (helical) occupy residues 1 to 7 (SALFLAM), 31 to 52 (WLIR…YLHI), and 67 to 79 (WNIG…LTMA). Heme b-binding residues include histidine 37 and histidine 51.

It belongs to the cytochrome b family. The cytochrome bc1 complex contains 11 subunits: 3 respiratory subunits (MT-CYB, CYC1 and UQCRFS1), 2 core proteins (UQCRC1 and UQCRC2) and 6 low-molecular weight proteins (UQCRH/QCR6, UQCRB/QCR7, UQCRQ/QCR8, UQCR10/QCR9, UQCR11/QCR10 and a cleavage product of UQCRFS1). This cytochrome bc1 complex then forms a dimer. It depends on heme b as a cofactor.

The protein localises to the mitochondrion inner membrane. Functionally, component of the ubiquinol-cytochrome c reductase complex (complex III or cytochrome b-c1 complex) that is part of the mitochondrial respiratory chain. The b-c1 complex mediates electron transfer from ubiquinol to cytochrome c. Contributes to the generation of a proton gradient across the mitochondrial membrane that is then used for ATP synthesis. The protein is Cytochrome b (MT-CYB) of Dipodomys californicus (California kangaroo rat).